The chain runs to 126 residues: MAIAGLGTDIVEISRLGKGDTANERLAKRVLTPAEWQQFCEHARPVRFLAKRFAAKEAAVKALGTGIGNGISWQHIEVRNNNLGAPELHFSGEFAAMCEARGITRSVVSISDEQHYAVATVILETV.

Residues Asp-9 and Glu-57 each coordinate Mg(2+).

This sequence belongs to the P-Pant transferase superfamily. AcpS family. Mg(2+) serves as cofactor.

The protein resides in the cytoplasm. It carries out the reaction apo-[ACP] + CoA = holo-[ACP] + adenosine 3',5'-bisphosphate + H(+). In terms of biological role, transfers the 4'-phosphopantetheine moiety from coenzyme A to a Ser of acyl-carrier-protein. The chain is Holo-[acyl-carrier-protein] synthase from Alteromonas mediterranea (strain DSM 17117 / CIP 110805 / LMG 28347 / Deep ecotype).